A 203-amino-acid polypeptide reads, in one-letter code: uncharacterized protein (203 aa).

Residues 171–191 (VGYLSIWLKEYWYLVVLFVLI) form a helical membrane-spanning segment.

The protein localises to the membrane. This is an uncharacterized protein from Methanocaldococcus jannaschii (strain ATCC 43067 / DSM 2661 / JAL-1 / JCM 10045 / NBRC 100440) (Methanococcus jannaschii).